A 159-amino-acid chain; its full sequence is Cyclic pyranopterin monophosphate synthase (159 aa).

Residues 76-78 (LCH) and 114-115 (ME) contribute to the substrate site. Asp129 is an active-site residue.

It belongs to the MoaC family. In terms of assembly, homohexamer; trimer of dimers.

The catalysed reaction is (8S)-3',8-cyclo-7,8-dihydroguanosine 5'-triphosphate = cyclic pyranopterin phosphate + diphosphate. It participates in cofactor biosynthesis; molybdopterin biosynthesis. Functionally, catalyzes the conversion of (8S)-3',8-cyclo-7,8-dihydroguanosine 5'-triphosphate to cyclic pyranopterin monophosphate (cPMP). The protein is Cyclic pyranopterin monophosphate synthase of Clostridium botulinum (strain Alaska E43 / Type E3).